The chain runs to 121 residues: UPF0212 protein VNG_0879C (121 aa).

The protein belongs to the UPF0212 family.

This is UPF0212 protein VNG_0879C from Halobacterium salinarum (strain ATCC 700922 / JCM 11081 / NRC-1) (Halobacterium halobium).